A 291-amino-acid polypeptide reads, in one-letter code: MTTLAIDIGGTKLAAALIGADGQIRDRRELPTPASQTPEALRDALSALVSPLQAHAQRVAIASTGIIRDGSLLALNPHNLGGLLHFPLVKTLEQLTNLPTIAINDAQAAAWAEFQALDGDITDMVFITVSTGVGGGVVSGCKLLTGPGGLAGHIGHTLADPHGPVCGCGRTGCVEAIASGRGIAAAAQGELAGADAKTIFTRAGQGDEQAQQLIHRSARTLARLIADIKATTDCQCVVVGGSVGLAEGYLALVETYLAQEPAAFHVDLLAAHYRHDAGLLGAALLAQGEKL.

Residues 5-12 and 132-139 contribute to the ATP site; these read AIDIGGTK and GVGGGVVS. 4 residues coordinate Zn(2+): His-156, Cys-166, Cys-168, and Cys-173.

This sequence belongs to the ROK (NagC/XylR) family. NanK subfamily. As to quaternary structure, homodimer.

The catalysed reaction is an N-acyl-D-mannosamine + ATP = an N-acyl-D-mannosamine 6-phosphate + ADP + H(+). It functions in the pathway amino-sugar metabolism; N-acetylneuraminate degradation; D-fructose 6-phosphate from N-acetylneuraminate: step 2/5. Its function is as follows. Catalyzes the phosphorylation of N-acetylmannosamine (ManNAc) to ManNAc-6-P. The protein is N-acetylmannosamine kinase of Escherichia coli (strain K12 / MC4100 / BW2952).